Here is a 56-residue protein sequence, read N- to C-terminus: uncharacterized protein (56 aa).

This is an uncharacterized protein from Schizosaccharomyces pombe (strain 972 / ATCC 24843) (Fission yeast).